Here is a 363-residue protein sequence, read N- to C-terminus: MFKRHKSLASERRRELISRGATRSILKDDMKNFHFLSQFILSAGPLKSTSAVKHSKTIHFEIEILDAQTKKQICIVDKVTQKSTIHDVKQKFHKACPQWYPSRVGLQLERGGPFLKDNLTIQSVAASSIVTLYFTDLGQQVSWTTVFLAEYTGPLLIYLLFYLRIPYIYNMKESSRRLCHPVVHLACFCHCIHYIRYLLETLFVHKVSSGHTSLKNLLKSCAFYWGFTSWIAYYINHPRYTPPSFGYRQVAISAINFLICEAGNHFINVVLSHPSHTGNNACFPSPNYNPFTWMFFLVSCPNYTYEIGSWISFTIMTQTLPVGIFTLLMSIQMSLWAKKKHKIYLKKFSSYMHRKSAMIPFIL.

Serine 37 is subject to Phosphoserine. 4 helical membrane-spanning segments follow: residues 143–163, 216–235, 250–270, and 311–331; these read WTTV…LFYL, NLLK…AYYI, VAIS…INVV, and ISFT…LMSI.

This sequence belongs to the steroid 5-alpha reductase family.

It is found in the membrane. It localises to the endoplasmic reticulum. The chain is Trans-2,3-enoyl-CoA reductase-like (TECRL) from Bos taurus (Bovine).